A 386-amino-acid polypeptide reads, in one-letter code: 3-hydroxyisobutyryl-CoA hydrolase, mitochondrial (386 aa).

Residues 1-32 (MGLQGLCRLMSRFNSYKRTNIILQHLKMSNHT) constitute a mitochondrion transit peptide. Lys-92 is subject to N6-acetyllysine; alternate. The residue at position 92 (Lys-92) is an N6-succinyllysine; alternate. Glu-121, Gly-146, Glu-169, and Asp-177 together coordinate substrate. Lys-221 carries the post-translational modification N6-acetyllysine; alternate. Lys-221 carries the N6-succinyllysine; alternate modification. Ser-234 is modified (phosphoserine). Residues Lys-250 and Lys-257 each carry the N6-succinyllysine modification. Residue Lys-297 is modified to N6-acetyllysine; alternate. Lys-297 carries the post-translational modification N6-succinyllysine; alternate. Residue Lys-301 is modified to N6-succinyllysine. Lys-353 is modified (N6-acetyllysine; alternate). Residue Lys-353 is modified to N6-succinyllysine; alternate. Ser-356 bears the Phosphoserine mark. Residues Lys-360 and Lys-365 each carry the N6-acetyllysine modification. At Lys-377 the chain carries N6-succinyllysine.

The protein belongs to the enoyl-CoA hydratase/isomerase family.

The protein localises to the mitochondrion. It catalyses the reaction 3-hydroxy-2-methylpropanoyl-CoA + H2O = 3-hydroxy-2-methylpropanoate + CoA + H(+). The protein operates within amino-acid degradation; L-valine degradation. Hydrolyzes 3-hydroxyisobutyryl-CoA (HIBYL-CoA), a saline catabolite. Has high activity toward isobutyryl-CoA. Could be an isobutyryl-CoA dehydrogenase that functions in valine catabolism. Also hydrolyzes 3-hydroxypropanoyl-CoA. The protein is 3-hydroxyisobutyryl-CoA hydrolase, mitochondrial (HIBCH) of Bos taurus (Bovine).